The sequence spans 169 residues: Small ribosomal subunit protein uS5 (169 aa).

The S5 DRBM domain occupies 14 to 77 (LQEKLVAVRR…EQARKNMRKV (64 aa)).

The protein belongs to the universal ribosomal protein uS5 family. Part of the 30S ribosomal subunit. Contacts proteins S4 and S8.

Functionally, with S4 and S12 plays an important role in translational accuracy. In terms of biological role, located at the back of the 30S subunit body where it stabilizes the conformation of the head with respect to the body. The polypeptide is Small ribosomal subunit protein uS5 (Methylococcus capsulatus (strain ATCC 33009 / NCIMB 11132 / Bath)).